The primary structure comprises 955 residues: Protein translocase subunit SecA (955 aa).

Residues glutamine 87, 105–109, and aspartate 494 contribute to the ATP site; that span reads GEGKT. The tract at residues 861 to 955 is disordered; the sequence is ASPAPAAPRP…KKAPRTKRKR (95 aa). Over residues 874-888 the composition is skewed to low complexity; that stretch reads QEAAQQAQGTAAPSA. The segment covering 943–955 has biased composition (basic residues); that stretch reads SKGKKAPRTKRKR.

The protein belongs to the SecA family. As to quaternary structure, monomer and homodimer. Part of the essential Sec protein translocation apparatus which comprises SecA, SecYEG and auxiliary proteins SecDF. Other proteins may also be involved.

Its subcellular location is the cell membrane. It is found in the cytoplasm. The catalysed reaction is ATP + H2O + cellular proteinSide 1 = ADP + phosphate + cellular proteinSide 2.. Its function is as follows. Part of the Sec protein translocase complex. Interacts with the SecYEG preprotein conducting channel. Has a central role in coupling the hydrolysis of ATP to the transfer of proteins into and across the cell membrane, serving as an ATP-driven molecular motor driving the stepwise translocation of polypeptide chains across the membrane. This Rhodococcus jostii (strain RHA1) protein is Protein translocase subunit SecA.